Here is a 293-residue protein sequence, read N- to C-terminus: Diaminopimelate epimerase (293 aa).

Positions 17, 47, and 67 each coordinate substrate. Cys76 serves as the catalytic Proton donor. Residues 77–78, Asn164, Asn197, and 215–216 contribute to the substrate site; these read GN and ER. The active-site Proton acceptor is the Cys224. 225 to 226 contributes to the substrate binding site; it reads GS.

Belongs to the diaminopimelate epimerase family. In terms of assembly, homodimer.

Its subcellular location is the cytoplasm. The enzyme catalyses (2S,6S)-2,6-diaminopimelate = meso-2,6-diaminopimelate. The protein operates within amino-acid biosynthesis; L-lysine biosynthesis via DAP pathway; DL-2,6-diaminopimelate from LL-2,6-diaminopimelate: step 1/1. Its function is as follows. Catalyzes the stereoinversion of LL-2,6-diaminopimelate (L,L-DAP) to meso-diaminopimelate (meso-DAP), a precursor of L-lysine and an essential component of the bacterial peptidoglycan. The polypeptide is Diaminopimelate epimerase (Rhodopseudomonas palustris (strain TIE-1)).